We begin with the raw amino-acid sequence, 160 residues long: Transcription elongation factor GreA (160 aa).

Positions 1 to 72 (MAEKTYPMTL…QISSLETKIR (72 aa)) form a coiled coil.

Belongs to the GreA/GreB family.

Necessary for efficient RNA polymerase transcription elongation past template-encoded arresting sites. The arresting sites in DNA have the property of trapping a certain fraction of elongating RNA polymerases that pass through, resulting in locked ternary complexes. Cleavage of the nascent transcript by cleavage factors such as GreA or GreB allows the resumption of elongation from the new 3'terminus. GreA releases sequences of 2 to 3 nucleotides. The sequence is that of Transcription elongation factor GreA from Streptococcus pneumoniae serotype 4 (strain ATCC BAA-334 / TIGR4).